The following is a 375-amino-acid chain: MTTRQRLSAERSQQLTRLLTITKTANMRALMEASELAKVIALVAVDIGKSDEMARAFPVLWPKISPQQEYYATAVDWFTNPDETVTSFDVVDMLDAGTSLDQDFMTYLKCLTELHKRRRKYGLILQRQPLPTMVQVSPRALMEYGPDFPPEALASWLTWRKFFYDLDNRSAQETGYLFEPILAAAIGGEAKSARERVVRRTDDPTKGRQVDCWKVLPDGTPLAYELKLRVTIAASGQGRFGEELSFARDCSSSGAKPILVVLDPTENDKLTGLQAAYREVGGAAYVGDAAWAHLEDEAGATMASFIERYVRVPVASVSSFERVIEGDATKRSLILQDLQARLDGNELTISLGGHQRLVERHEDQSLAADGDDDSE.

The enzyme catalyses Endonucleolytic cleavage of DNA to give specific double-stranded fragments with terminal 5'-phosphates.. In terms of biological role, a subtype P restriction enzyme that recognizes the double-stranded sequence 5'-GTGCAC-3' and cleaves after G-1. This Acetobacter pasteurianus (Acetobacter turbidans) protein is Type II restriction enzyme ApaLI.